Reading from the N-terminus, the 297-residue chain is Polyamine aminopropyltransferase 2 (297 aa).

The PABS domain maps to 26-258 (FYWEPDVEGG…DLWTFFVALK (233 aa)). Gln-53 is a binding site for S-methyl-5'-thioadenosine. 2 residues coordinate spermidine: His-84 and Glu-108. Residues Asp-128 and 157 to 158 (DV) each bind S-methyl-5'-thioadenosine. The active-site Proton acceptor is the Asp-176. Pro-184 is a binding site for S-methyl-5'-thioadenosine.

It belongs to the spermidine/spermine synthase family. As to quaternary structure, homodimer or homotetramer.

The protein resides in the cytoplasm. It carries out the reaction S-adenosyl 3-(methylsulfanyl)propylamine + putrescine = S-methyl-5'-thioadenosine + spermidine + H(+). It participates in amine and polyamine biosynthesis; spermidine biosynthesis; spermidine from putrescine: step 1/1. In terms of biological role, catalyzes the irreversible transfer of a propylamine group from the amino donor S-adenosylmethioninamine (decarboxy-AdoMet) to putrescine (1,4-diaminobutane) to yield spermidine. The sequence is that of Polyamine aminopropyltransferase 2 from Caldanaerobacter subterraneus subsp. tengcongensis (strain DSM 15242 / JCM 11007 / NBRC 100824 / MB4) (Thermoanaerobacter tengcongensis).